Here is a 445-residue protein sequence, read N- to C-terminus: Glutamate--tRNA ligase 1 (445 aa).

The 'HIGH' region signature appears at 10–20 (PSPTGMLHVGN). The short motif at 240-244 (KISKR) is the 'KMSKS' region element. ATP is bound at residue lysine 243.

Belongs to the class-I aminoacyl-tRNA synthetase family. Glutamate--tRNA ligase type 1 subfamily. As to quaternary structure, monomer.

It localises to the cytoplasm. It carries out the reaction tRNA(Glu) + L-glutamate + ATP = L-glutamyl-tRNA(Glu) + AMP + diphosphate. In terms of biological role, catalyzes the attachment of glutamate to tRNA(Glu) in a two-step reaction: glutamate is first activated by ATP to form Glu-AMP and then transferred to the acceptor end of tRNA(Glu). This is Glutamate--tRNA ligase 1 from Rickettsia bellii (strain OSU 85-389).